The primary structure comprises 201 residues: LexA repressor (201 aa).

The H-T-H motif DNA-binding region spans 28–48; sequence MRDIAAHLRISGTLGVSKHLT. Catalysis depends on for autocatalytic cleavage activity residues serine 120 and lysine 157.

This sequence belongs to the peptidase S24 family. Homodimer.

It catalyses the reaction Hydrolysis of Ala-|-Gly bond in repressor LexA.. Represses a number of genes involved in the response to DNA damage (SOS response), including recA and lexA. In the presence of single-stranded DNA, RecA interacts with LexA causing an autocatalytic cleavage which disrupts the DNA-binding part of LexA, leading to derepression of the SOS regulon and eventually DNA repair. This chain is LexA repressor, found in Geobacter metallireducens (strain ATCC 53774 / DSM 7210 / GS-15).